A 1316-amino-acid chain; its full sequence is DNA-directed RNA polymerase subunit beta' (1316 aa).

4 residues coordinate Zn(2+): Cys-60, Cys-62, Cys-75, and Cys-78. Positions 535, 537, and 539 each coordinate Mg(2+). Zn(2+) contacts are provided by Cys-891, Cys-968, Cys-975, and Cys-978.

The protein belongs to the RNA polymerase beta' chain family. In terms of assembly, the RNAP catalytic core consists of 2 alpha, 1 beta, 1 beta' and 1 omega subunit. When a sigma factor is associated with the core the holoenzyme is formed, which can initiate transcription. Requires Mg(2+) as cofactor. The cofactor is Zn(2+).

The enzyme catalyses RNA(n) + a ribonucleoside 5'-triphosphate = RNA(n+1) + diphosphate. Functionally, DNA-dependent RNA polymerase catalyzes the transcription of DNA into RNA using the four ribonucleoside triphosphates as substrates. The sequence is that of DNA-directed RNA polymerase subunit beta' from Mycolicibacterium paratuberculosis (strain ATCC BAA-968 / K-10) (Mycobacterium paratuberculosis).